The primary structure comprises 108 residues: Urease subunit beta (108 aa).

Belongs to the urease beta subunit family. Heterotrimer of UreA (gamma), UreB (beta) and UreC (alpha) subunits. Three heterotrimers associate to form the active enzyme.

Its subcellular location is the cytoplasm. The catalysed reaction is urea + 2 H2O + H(+) = hydrogencarbonate + 2 NH4(+). The protein operates within nitrogen metabolism; urea degradation; CO(2) and NH(3) from urea (urease route): step 1/1. The chain is Urease subunit beta from Nocardia farcinica (strain IFM 10152).